Here is a 132-residue protein sequence, read N- to C-terminus: Large ribosomal subunit protein uL14 (132 aa).

This sequence belongs to the universal ribosomal protein uL14 family. As to quaternary structure, part of the 50S ribosomal subunit. Forms a cluster with proteins L3 and L24e, part of which may contact the 16S rRNA in 2 intersubunit bridges.

Functionally, binds to 23S rRNA. Forms part of two intersubunit bridges in the 70S ribosome. The protein is Large ribosomal subunit protein uL14 of Methanospirillum hungatei JF-1 (strain ATCC 27890 / DSM 864 / NBRC 100397 / JF-1).